Reading from the N-terminus, the 582-residue chain is Formate--tetrahydrofolate ligase (582 aa).

An ATP-binding site is contributed by 65-72 (TPLGEGKT).

It belongs to the formate--tetrahydrofolate ligase family.

The enzyme catalyses (6S)-5,6,7,8-tetrahydrofolate + formate + ATP = (6R)-10-formyltetrahydrofolate + ADP + phosphate. Its pathway is one-carbon metabolism; tetrahydrofolate interconversion. The protein is Formate--tetrahydrofolate ligase of Vibrio campbellii (strain ATCC BAA-1116).